Consider the following 210-residue polypeptide: Na(+)-translocating NADH-quinone reductase subunit D (210 aa).

6 consecutive transmembrane segments (helical) span residues 11–31 (ILAP…VCSA), 42–62 (FVMT…VSLI), 72–92 (IIVQ…VLKA), 103–123 (VFVG…AFAM), 131–151 (FIDG…VGFF), and 178–198 (NGLM…IWAI).

The protein belongs to the NqrDE/RnfAE family. As to quaternary structure, composed of six subunits; NqrA, NqrB, NqrC, NqrD, NqrE and NqrF.

Its subcellular location is the cell inner membrane. The enzyme catalyses a ubiquinone + n Na(+)(in) + NADH + H(+) = a ubiquinol + n Na(+)(out) + NAD(+). NQR complex catalyzes the reduction of ubiquinone-1 to ubiquinol by two successive reactions, coupled with the transport of Na(+) ions from the cytoplasm to the periplasm. NqrA to NqrE are probably involved in the second step, the conversion of ubisemiquinone to ubiquinol. This Vibrio atlanticus (strain LGP32) (Vibrio splendidus (strain Mel32)) protein is Na(+)-translocating NADH-quinone reductase subunit D.